The chain runs to 103 residues: ATP synthase F(0) complex subunit g, mitochondrial (103 aa).

At Ala-2 the chain carries N-acetylalanine. Residues Lys-11, Lys-24, Lys-35, and Lys-54 each carry the N6-acetyllysine modification.

Belongs to the ATPase g subunit family. As to quaternary structure, component of the ATP synthase complex composed at least of ATP5F1A/subunit alpha, ATP5F1B/subunit beta, ATP5MC1/subunit c (homooctomer), MT-ATP6/subunit a, MT-ATP8/subunit 8, ATP5ME/subunit e, ATP5MF/subunit f, ATP5MG/subunit g, ATP5MK/subunit k, ATP5MJ/subunit j, ATP5F1C/subunit gamma, ATP5F1D/subunit delta, ATP5F1E/subunit epsilon, ATP5PF/subunit F6, ATP5PB/subunit b, ATP5PD/subunit d, ATP5PO/subunit OSCP. ATP synthase complex consists of a soluble F(1) head domain (subunits alpha(3) and beta(3)) - the catalytic core - and a membrane F(0) domain - the membrane proton channel (subunits c, a, 8, e, f, g, k and j). These two domains are linked by a central stalk (subunits gamma, delta, and epsilon) rotating inside the F1 region and a stationary peripheral stalk (subunits F6, b, d, and OSCP).

The protein resides in the mitochondrion. It localises to the mitochondrion inner membrane. Subunit g, of the mitochondrial membrane ATP synthase complex (F(1)F(0) ATP synthase or Complex V) that produces ATP from ADP in the presence of a proton gradient across the membrane which is generated by electron transport complexes of the respiratory chain. ATP synthase complex consist of a soluble F(1) head domain - the catalytic core - and a membrane F(1) domain - the membrane proton channel. These two domains are linked by a central stalk rotating inside the F(1) region and a stationary peripheral stalk. During catalysis, ATP synthesis in the catalytic domain of F(1) is coupled via a rotary mechanism of the central stalk subunits to proton translocation. In vivo, can only synthesize ATP although its ATP hydrolase activity can be activated artificially in vitro. Part of the complex F(0) domain. The chain is ATP synthase F(0) complex subunit g, mitochondrial from Homo sapiens (Human).